Here is an 80-residue protein sequence, read N- to C-terminus: Cell division activator CedA (80 aa).

Belongs to the CedA family.

Activates the cell division inhibited by chromosomal DNA over-replication. This Citrobacter koseri (strain ATCC BAA-895 / CDC 4225-83 / SGSC4696) protein is Cell division activator CedA.